Consider the following 346-residue polypeptide: S-adenosylmethionine:tRNA ribosyltransferase-isomerase (346 aa).

Belongs to the QueA family. In terms of assembly, monomer.

The protein localises to the cytoplasm. It carries out the reaction 7-aminomethyl-7-carbaguanosine(34) in tRNA + S-adenosyl-L-methionine = epoxyqueuosine(34) in tRNA + adenine + L-methionine + 2 H(+). It functions in the pathway tRNA modification; tRNA-queuosine biosynthesis. In terms of biological role, transfers and isomerizes the ribose moiety from AdoMet to the 7-aminomethyl group of 7-deazaguanine (preQ1-tRNA) to give epoxyqueuosine (oQ-tRNA). The protein is S-adenosylmethionine:tRNA ribosyltransferase-isomerase of Lactococcus lactis subsp. cremoris (strain MG1363).